The following is a 424-amino-acid chain: MFLLPRFILVSCIIGSLGFYNPPTNVVSHVNGDWFLFGDSRSDCNHIVNINPHNYSYMDLNPVLCDSGKISSKAGNSIFRSFHFTDFYNYTGEGQQIIFYEGVNFTPYHAFKCNRSGSNDIWMQNKGLFYTQVYKNMAVYRSLTFVNVPYVYNGSAQSTALCKSGSLVLNNPAYIAPQANSGDYYYKVEADFYLSGCDEYIVPLCIFNGKFLSNTKYYDDSQYYFNKDTGVIYGLNSTETITTGFDLNCYYLVLPSGNYLAISNELLLTVPTKAICLNKRKDFTPVQVVDSRWNNARQSDNMTAVACQPPYCYFRNSTTNYVGVYDINHGDAGFTSILSGLLYNSPCFSQQGVFRYDNVSSVWPLYPYGRCPTAADINNPDLPICVYDPLPVILLGILLGVAVIIIVVLLLYFMVDNGTRLHDA.

The first 16 residues, 1-16, serve as a signal peptide directing secretion; the sequence is MFLLPRFILVSCIIGS. The tract at residues 7-127 is esterase domain 1; it reads FILVSCIIGS…SNDIWMQNKG (121 aa). Residues 17–392 lie on the Virion surface side of the membrane; the sequence is LGFYNPPTNV…PICVYDPLPV (376 aa). Residue Ser40 is the Nucleophile of the active site. Cys44 and Cys65 are disulfide-bonded. N-linked (GlcNAc...) asparagine; by host glycosylation is found at Asn54, Asn89, Asn114, Asn153, Asn236, and Asn301. 3 disulfide bridges follow: Cys113/Cys162, Cys197/Cys276, and Cys205/Cys249. Residues 128–266 are receptor binding; the sequence is LFYTQVYKNM…GNYLAISNEL (139 aa). Residues 267-379 form an esterase domain 2 region; sequence LLTVPTKAIC…RCPTAADINN (113 aa). Cys307 and Cys312 are disulfide-bonded. Asn316 carries an N-linked (GlcNAc...) asparagine; by host glycan. Catalysis depends on charge relay system residues Asp326 and His329. A disulfide bridge links Cys347 with Cys371. Residue Asn358 is glycosylated (N-linked (GlcNAc...) asparagine; by host). The chain crosses the membrane as a helical span at residues 393–413; it reads ILLGILLGVAVIIIVVLLLYF. Topologically, residues 414-424 are intravirion; the sequence is MVDNGTRLHDA. The N-linked (GlcNAc...) asparagine; by host glycan is linked to Asn417.

This sequence belongs to the influenza type C/coronaviruses hemagglutinin-esterase family. In terms of assembly, homodimer; disulfide-linked. Forms a complex with the M protein in the pre-Golgi. Associates then with S-M complex to form a ternary complex S-M-HE. Post-translationally, N-glycosylated in the host RER.

The protein resides in the virion membrane. Its subcellular location is the host cell membrane. It carries out the reaction N-acetyl-9-O-acetylneuraminate + H2O = N-acetylneuraminate + acetate + H(+). It catalyses the reaction N-acetyl-4-O-acetylneuraminate + H2O = N-acetylneuraminate + acetate + H(+). Functionally, structural protein that makes short spikes at the surface of the virus. Contains receptor binding and receptor-destroying activities. Mediates de-O-acetylation of N-acetyl-4-O-acetylneuraminic acid, which is probably the receptor determinant recognized by the virus on the surface of erythrocytes and susceptible cells. This receptor-destroying activity is important for virus release as it probably helps preventing self-aggregation and ensures the efficient spread of the progeny virus from cell to cell. May serve as a secondary viral attachment protein for initiating infection, the spike protein being the major one. May become a target for both the humoral and the cellular branches of the immune system. The sequence is that of Hemagglutinin-esterase from Homo sapiens (Human).